The sequence spans 113 residues: Small ribosomal subunit protein uS17 (113 aa).

The protein belongs to the universal ribosomal protein uS17 family. Part of the 30S ribosomal subunit.

In terms of biological role, one of the primary rRNA binding proteins, it binds specifically to the 5'-end of 16S ribosomal RNA. The protein is Small ribosomal subunit protein uS17 of Nanoarchaeum equitans (strain Kin4-M).